We begin with the raw amino-acid sequence, 482 residues long: Glutamyl-tRNA(Gln) amidotransferase subunit A (482 aa).

Residues Lys-75 and Ser-150 each act as charge relay system in the active site. Catalysis depends on Ser-174, which acts as the Acyl-ester intermediate.

Belongs to the amidase family. GatA subfamily. In terms of assembly, heterotrimer of A, B and C subunits.

The enzyme catalyses L-glutamyl-tRNA(Gln) + L-glutamine + ATP + H2O = L-glutaminyl-tRNA(Gln) + L-glutamate + ADP + phosphate + H(+). Its function is as follows. Allows the formation of correctly charged Gln-tRNA(Gln) through the transamidation of misacylated Glu-tRNA(Gln) in organisms which lack glutaminyl-tRNA synthetase. The reaction takes place in the presence of glutamine and ATP through an activated gamma-phospho-Glu-tRNA(Gln). The protein is Glutamyl-tRNA(Gln) amidotransferase subunit A of Rippkaea orientalis (strain PCC 8801 / RF-1) (Cyanothece sp. (strain PCC 8801)).